The following is a 433-amino-acid chain: Schlafen-like protein 2 (433 aa).

The B30.2/SPRY domain maps to 1–168 (MADTSPRESK…LSVNFGSQPF (168 aa)). The interval 199-400 (EHVVVKLPFA…RRMASNKCVY (202 aa)) is SLFN-like fold. Catalysis depends on residues E211 and E216.

This sequence belongs to the Schlafen family. As to quaternary structure, component of the trimeric PUCH (precursor of 21U RNA 5'-end cleavage holoenzyme) complex; consisting of tofu-1, tofu-2 and either slfl-3 or slfl-4. Within the complex, interacts (via N-terminus) with tofu-1 (via N-terminus); the interaction stabilizes tofu-2 and may form a functional nuclease. Within the complex, interacts (via N-terminus) with slfl-3 (via N-terminus); the presence of tofu-1 is required for this interaction. The cofactor is Mg(2+). Expressed in the germline.

It localises to the cytoplasm. Its subcellular location is the mitochondrion. With respect to regulation, inhibited by ethylenediaminetetraacetic acid (EDTA). In terms of biological role, component of the trimeric PUCH (precursor of 21U RNA 5'-end cleavage holoenzyme) complex, that acts as an endoribonuclease processing the 5'-end of precursor Piwi-interacting RNAs (piRNAs). The PUCH complex consists of tofu-1, tofu-2 and either slfl-3 or slfl-4, with tofu-2 exhibiting endoribonuclease activity. PUCH-mediated processing strictly requires a 7-methyl-G cap (m7 G-cap) and an uracil at position three (U3). PUCH also exhibits a strict bias for piRNA precursors with an A or G at position 1. Mature piRNA production is enhanced by the interaction of PUCH with the PETISCO complex, which is stabilizing piRNA precursors and allows their processing by PUCH. This Caenorhabditis elegans protein is Schlafen-like protein 2.